Here is an 82-residue protein sequence, read N- to C-terminus: Polyferredoxin protein FwdG (82 aa).

2 4Fe-4S ferredoxin-type domains span residues 4-33 (YELV…PETW) and 51-80 (VVTV…LVFK). Residues cysteine 13, cysteine 16, cysteine 19, cysteine 23, cysteine 60, cysteine 63, cysteine 66, and cysteine 70 each coordinate [4Fe-4S] cluster.

The cofactor is [4Fe-4S] cluster.

The polypeptide is Polyferredoxin protein FwdG (fwdG) (Methanocaldococcus jannaschii (strain ATCC 43067 / DSM 2661 / JAL-1 / JCM 10045 / NBRC 100440) (Methanococcus jannaschii)).